The following is a 323-amino-acid chain: GMP reductase (323 aa).

The active-site Thioimidate intermediate is the cysteine 174. Residue 203-226 (IIADGGIRHNGDIAKSVRFGASMV) coordinates NADP(+).

The protein belongs to the IMPDH/GMPR family. GuaC type 2 subfamily.

It carries out the reaction IMP + NH4(+) + NADP(+) = GMP + NADPH + 2 H(+). Catalyzes the irreversible NADPH-dependent deamination of GMP to IMP. It functions in the conversion of nucleobase, nucleoside and nucleotide derivatives of G to A nucleotides, and in maintaining the intracellular balance of A and G nucleotides. In Oenococcus oeni (strain ATCC BAA-331 / PSU-1), this protein is GMP reductase.